A 249-amino-acid polypeptide reads, in one-letter code: Chitooligosaccharide deacetylase (249 aa).

Residues His-61 and His-125 each contribute to the Mg(2+) site.

The protein belongs to the YdjC deacetylase family. ChbG subfamily. In terms of assembly, homodimer. The cofactor is Mg(2+).

It is found in the cytoplasm. The catalysed reaction is N,N'-diacetylchitobiose + H2O = N-acetyl-beta-D-glucosaminyl-(1-&gt;4)-D-glucosamine + acetate. It catalyses the reaction diacetylchitobiose-6'-phosphate + H2O = N'-monoacetylchitobiose-6'-phosphate + acetate. Its pathway is glycan degradation; chitin degradation. Involved in the degradation of chitin. ChbG is essential for growth on the acetylated chitooligosaccharides chitobiose and chitotriose but is dispensable for growth on cellobiose and chitosan dimer, the deacetylated form of chitobiose. Deacetylation of chitobiose-6-P and chitotriose-6-P is necessary for both the activation of the chb promoter by the regulatory protein ChbR and the hydrolysis of phosphorylated beta-glucosides by the phospho-beta-glucosidase ChbF. Catalyzes the removal of only one acetyl group from chitobiose-6-P to yield monoacetylchitobiose-6-P, the inducer of ChbR and the substrate of ChbF. The chain is Chitooligosaccharide deacetylase from Escherichia coli O7:K1 (strain IAI39 / ExPEC).